The chain runs to 413 residues: Branched-chain-amino-acid aminotransferase 3, chloroplastic (413 aa).

A chloroplast-targeting transit peptide spans 1–60 (MERAAILPSVNQNYLLCPSRAFSTRLHSSTRNLSPPSFASIKLQHSSSSVSSNGGISLTR). Lys-259 bears the N6-(pyridoxal phosphate)lysine mark.

It belongs to the class-IV pyridoxal-phosphate-dependent aminotransferase family. It depends on pyridoxal 5'-phosphate as a cofactor. Expressed in the phloem cells.

The protein localises to the plastid. The protein resides in the chloroplast. The catalysed reaction is L-leucine + 2-oxoglutarate = 4-methyl-2-oxopentanoate + L-glutamate. It carries out the reaction L-isoleucine + 2-oxoglutarate = (S)-3-methyl-2-oxopentanoate + L-glutamate. It catalyses the reaction L-valine + 2-oxoglutarate = 3-methyl-2-oxobutanoate + L-glutamate. The enzyme catalyses a 2-oxocarboxylate + L-methionine = 4-methylsulfanyl-2-oxobutanoate + an L-alpha-amino acid. Its pathway is amino-acid biosynthesis; L-isoleucine biosynthesis; L-isoleucine from 2-oxobutanoate: step 4/4. It participates in amino-acid biosynthesis; L-leucine biosynthesis; L-leucine from 3-methyl-2-oxobutanoate: step 4/4. It functions in the pathway amino-acid biosynthesis; L-valine biosynthesis; L-valine from pyruvate: step 4/4. Its activity is regulated as follows. Inhibited by Ser- or Thr-derived imine. Converts 2-oxo acids to branched-chain amino acids. Acts on leucine, isoleucine and valine. Also involved in methionine chain elongation cycle of aliphatic glucosinolate formation. Catalyzes the conversion of 5-methylthiopentyl-2-oxo and 6-methylthiohexyl-2-oxo acids to their respective Met derivatives, homomethionine and dihomo-methionine, respectively. The chain is Branched-chain-amino-acid aminotransferase 3, chloroplastic from Arabidopsis thaliana (Mouse-ear cress).